The primary structure comprises 266 residues: Small ribosomal subunit protein uS3 (266 aa).

Residues 39-107 (VREYLKKKLK…PVHVNIEEIR (69 aa)) enclose the KH type-2 domain. Positions 218–266 (EVAEDKRPRRNARPGDRRPRRDGEGGAPGARRGAPRRGAGKPEDGKTGE) are disordered. Composition is skewed to basic and acidic residues over residues 230-241 (RPGDRRPRRDGE) and 257-266 (GKPEDGKTGE).

This sequence belongs to the universal ribosomal protein uS3 family. In terms of assembly, part of the 30S ribosomal subunit. Forms a tight complex with proteins S10 and S14.

Its function is as follows. Binds the lower part of the 30S subunit head. Binds mRNA in the 70S ribosome, positioning it for translation. This Burkholderia ambifaria (strain MC40-6) protein is Small ribosomal subunit protein uS3.